The chain runs to 406 residues: Paracaspase (406 aa).

The tract at residues 193 to 374 (IGNSKYSQHR…TERKNNNIST (182 aa)) is caspase-like. Active-site residues include histidine 266 and cysteine 311.

Belongs to the peptidase C14B family.

Not required for DIF-induced autophagic cell death and necrotic cell death. The polypeptide is Paracaspase (pcp) (Dictyostelium discoideum (Social amoeba)).